The following is a 1270-amino-acid chain: DNA-directed RNA polymerase subunit beta (1270 aa).

It belongs to the RNA polymerase beta chain family. In terms of assembly, the RNAP catalytic core consists of 2 alpha, 1 beta, 1 beta' and 1 omega subunit. When a sigma factor is associated with the core the holoenzyme is formed, which can initiate transcription.

The catalysed reaction is RNA(n) + a ribonucleoside 5'-triphosphate = RNA(n+1) + diphosphate. Its function is as follows. DNA-dependent RNA polymerase catalyzes the transcription of DNA into RNA using the four ribonucleoside triphosphates as substrates. In Christiangramia forsetii (strain DSM 17595 / CGMCC 1.15422 / KT0803) (Gramella forsetii), this protein is DNA-directed RNA polymerase subunit beta.